The chain runs to 1031 residues: GTPase activating protein Gyp51 (1031 aa).

A compositionally biased stretch (basic and acidic residues) spans 1–32 (MAFTEANEREVQSSYEKENVKIIREEEAKDQE). Disordered stretches follow at residues 1–229 (MAFT…TNVN), 278–317 (FIEQNGPNSDTVSGFKETSSIVNSSSTTEKPGVALDSQND), 339–371 (DHLPENVESEPVAGKENETAKNESGASDNDHKA), 420–459 (NDELSASGSQEPHPKDGTNSTSSLPLDTNNLSNSEPPSHV), and 490–520 (KKNTAFSPGTSLSTNHVKTKSRSAHNNSTSP). Residues 43 to 59 (TGTSPDLNFFSTQNVMQ) show a composition bias toward polar residues. Over residues 62 to 78 (FEDEYSEFSNEDDEAEI) the composition is skewed to acidic residues. Over residues 105–117 (SQQSVEEQNNTTN) the composition is skewed to polar residues. Basic and acidic residues predominate over residues 195–217 (EDLKDEVKSVHEFNEPNDLRQQE). Over residues 219-229 (SYSDDDDTNVN) the composition is skewed to acidic residues. Over residues 278-306 (FIEQNGPNSDTVSGFKETSSIVNSSSTTE) the composition is skewed to polar residues. 3 stretches are compositionally biased toward polar residues: residues 420–429 (NDELSASGSQ), 436–455 (GTNSTSSLPLDTNNLSNSEP), and 493–505 (TAFSPGTSLSTNH). Positions 610-806 (HNSHTVHTVV…HLYDILFLYG (197 aa)) constitute a Rab-GAP TBC domain. A helical transmembrane segment spans residues 798–818 (LYDILFLYGPGILFNFGLALL).

This sequence belongs to the GYP5 family.

The protein localises to the membrane. Its subcellular location is the cytoplasm. Its function is as follows. GTPase-activating protein involved in ER to Golgi trafficking and polarized exocytosis. The chain is GTPase activating protein Gyp51 (gyp51) from Schizosaccharomyces pombe (strain 972 / ATCC 24843) (Fission yeast).